The primary structure comprises 237 residues: Class B acid phosphatase (237 aa).

Positions 1-25 (MRKVSLALSAACLLFTLNYTASALA) are cleaved as a signal peptide. Asp-69 (nucleophile) is an active-site residue. The Mg(2+) site is built by Asp-69 and Asp-71. The active-site Proton donor is the Asp-71. Residues 137–138 (TG) and Lys-177 contribute to the substrate site. Asp-192 provides a ligand contact to Mg(2+).

It belongs to the class B bacterial acid phosphatase family. In terms of assembly, homotetramer. The cofactor is Mg(2+).

Its subcellular location is the periplasm. It catalyses the reaction a phosphate monoester + H2O = an alcohol + phosphate. Functionally, dephosphorylates several organic phosphate monoesters. Also has a phosphotransferase activity catalyzing the transfer of low-energy phosphate groups from organic phosphate monoesters to free hydroxyl groups of various organic compounds. The chain is Class B acid phosphatase from Citrobacter rodentium (strain ICC168) (Citrobacter freundii biotype 4280).